The chain runs to 397 residues: Keratinocyte differentiation factor 1 (397 aa).

A compositionally biased stretch (pro residues) spans 1–16 (MPRPGQPRPSSGPPRL). Disordered regions lie at residues 1 to 67 (MPRP…SAEP), 130 to 158 (EHNG…MGSS), and 192 to 214 (LAEP…RGSE). Positions 44–55 (RPDPKDPGHHGP) are enriched in basic and acidic residues. Positions 201 to 211 (SLPSTFTNSPR) are enriched in polar residues. S218 is modified (phosphoserine). 2 disordered regions span residues 304-339 (ISTR…TMLG) and 361-392 (ARKL…GAPL). The span at 321 to 330 (ARSTAPAAAP) shows a compositional bias: low complexity. Over residues 375 to 388 (SQDSSFQGTDTDSS) the composition is skewed to polar residues.

Its subcellular location is the cytoplasm. The protein localises to the cell junction. Plays a role in the regulation of the epidermis formation during early development. Required both as an inhibitor of basal cell proliferation and a promoter of differentiation of basal progenitor cell progeny. This is Keratinocyte differentiation factor 1 (Kdf1) from Mus musculus (Mouse).